The sequence spans 196 residues: dTTP/UTP pyrophosphatase (196 aa).

D77 serves as the catalytic Proton acceptor.

The protein belongs to the Maf family. YhdE subfamily. The cofactor is a divalent metal cation.

It localises to the cytoplasm. It carries out the reaction dTTP + H2O = dTMP + diphosphate + H(+). The catalysed reaction is UTP + H2O = UMP + diphosphate + H(+). Functionally, nucleoside triphosphate pyrophosphatase that hydrolyzes dTTP and UTP. May have a dual role in cell division arrest and in preventing the incorporation of modified nucleotides into cellular nucleic acids. In Christiangramia forsetii (strain DSM 17595 / CGMCC 1.15422 / KT0803) (Gramella forsetii), this protein is dTTP/UTP pyrophosphatase.